We begin with the raw amino-acid sequence, 394 residues long: Imidazolonepropionase (394 aa).

Fe(3+) is bound by residues H61 and H63. Zn(2+) is bound by residues H61 and H63. Positions 70, 133, and 164 each coordinate 4-imidazolone-5-propanoate. N-formimidoyl-L-glutamate is bound at residue Y133. A Fe(3+)-binding site is contributed by H225. H225 contributes to the Zn(2+) binding site. A 4-imidazolone-5-propanoate-binding site is contributed by E228. Residue D299 coordinates Fe(3+). D299 provides a ligand contact to Zn(2+).

This sequence belongs to the metallo-dependent hydrolases superfamily. HutI family. Requires Zn(2+) as cofactor. Fe(3+) is required as a cofactor.

It localises to the cytoplasm. The catalysed reaction is 4-imidazolone-5-propanoate + H2O = N-formimidoyl-L-glutamate. The protein operates within amino-acid degradation; L-histidine degradation into L-glutamate; N-formimidoyl-L-glutamate from L-histidine: step 3/3. Functionally, catalyzes the hydrolytic cleavage of the carbon-nitrogen bond in imidazolone-5-propanoate to yield N-formimidoyl-L-glutamate. It is the third step in the universal histidine degradation pathway. The polypeptide is Imidazolonepropionase (Picrophilus torridus (strain ATCC 700027 / DSM 9790 / JCM 10055 / NBRC 100828 / KAW 2/3)).